A 239-amino-acid polypeptide reads, in one-letter code: Glucosamine-6-phosphate deaminase (239 aa).

Catalysis depends on Asp-62, which acts as the Proton acceptor; for enolization step. Asn-128 serves as the catalytic For ring-opening step. His-130 serves as the catalytic Proton acceptor; for ring-opening step. The active-site For ring-opening step is Glu-135.

The protein belongs to the glucosamine/galactosamine-6-phosphate isomerase family. NagB subfamily.

The catalysed reaction is alpha-D-glucosamine 6-phosphate + H2O = beta-D-fructose 6-phosphate + NH4(+). It functions in the pathway amino-sugar metabolism; N-acetylneuraminate degradation; D-fructose 6-phosphate from N-acetylneuraminate: step 5/5. In terms of biological role, catalyzes the reversible isomerization-deamination of glucosamine 6-phosphate (GlcN6P) to form fructose 6-phosphate (Fru6P) and ammonium ion. The protein is Glucosamine-6-phosphate deaminase of Lactobacillus johnsonii (strain CNCM I-12250 / La1 / NCC 533).